The sequence spans 525 residues: AP-4 complex accessory subunit Tepsin (525 aa).

The ENTH domain maps to 8–141 (RDRLSFLHRL…FSDTVLPLAP (134 aa)). The disordered stretch occupies residues 139–229 (LAPSQPLGTP…SHSGASREPG (91 aa)). Residues 193–225 (SGPSSQNSSQNSDLSRVSDSGSHSGSDSHSGAS) show a composition bias toward low complexity. Residues Ser333 and Ser356 each carry the phosphoserine modification. The tract at residues 355-465 (LSPARGTSAE…PKRGPSSCAW (111 aa)) is disordered. A compositionally biased stretch (low complexity) spans 393 to 412 (PLSSTPVSSRSPAPSSGMPS). Residues 413–429 (SPVPTPPPDASPIPAPG) show a composition bias toward pro residues. A compositionally biased stretch (basic and acidic residues) spans 434–448 (AEARLAESRRWRPER). The interval 467 to 477 (RDSLFAGMELV) is interaction with AP4B1. Positions 487 to 525 (AAAGESCPDAPRAPQTSSQRTAAKEPPGSEPSAFAFLNA) are disordered. The tract at residues 515–525 (SEPSAFAFLNA) is interaction with AP4E1.

In terms of assembly, interacts with AP4B1 and AP4E1; the interaction is direct and mediates the association of TEPSIN with the adapter-like complex 4 (AP-4), a heterotetramer composed of AP4B1, AP4E1, AP4M1 and AP4S1.

The protein resides in the golgi apparatus. It localises to the trans-Golgi network membrane. The protein localises to the cytoplasmic vesicle. Its subcellular location is the cytoplasm. It is found in the cytosol. In terms of biological role, associates with the adapter-like complex 4 (AP-4) and may therefore play a role in vesicular trafficking of proteins at the trans-Golgi network. The sequence is that of AP-4 complex accessory subunit Tepsin from Homo sapiens (Human).